A 486-amino-acid chain; its full sequence is F-box protein At1g80960 (486 aa).

Residues Val-49 to Arg-97 form the F-box domain.

This is F-box protein At1g80960 from Arabidopsis thaliana (Mouse-ear cress).